We begin with the raw amino-acid sequence, 129 residues long: Glyoxalase domain-containing protein 5 homolog (129 aa).

A VOC domain is found at 5 to 128; it reads RLDHLVLTVS…DYNLIEISNY (124 aa).

The protein belongs to the glyoxalase I family.

The protein is Glyoxalase domain-containing protein 5 homolog (glod5) of Dictyostelium discoideum (Social amoeba).